Reading from the N-terminus, the 132-residue chain is Phosphoribosyl-AMP cyclohydrolase (132 aa).

Asp79 contacts Mg(2+). Cys80 contacts Zn(2+). Mg(2+) is bound by residues Asp81 and Asp83. Residues Cys100 and Cys107 each contribute to the Zn(2+) site.

Belongs to the PRA-CH family. Homodimer. Requires Mg(2+) as cofactor. Zn(2+) is required as a cofactor.

It localises to the cytoplasm. The catalysed reaction is 1-(5-phospho-beta-D-ribosyl)-5'-AMP + H2O = 1-(5-phospho-beta-D-ribosyl)-5-[(5-phospho-beta-D-ribosylamino)methylideneamino]imidazole-4-carboxamide. It participates in amino-acid biosynthesis; L-histidine biosynthesis; L-histidine from 5-phospho-alpha-D-ribose 1-diphosphate: step 3/9. Its function is as follows. Catalyzes the hydrolysis of the adenine ring of phosphoribosyl-AMP. This Delftia acidovorans (strain DSM 14801 / SPH-1) protein is Phosphoribosyl-AMP cyclohydrolase.